The following is a 426-amino-acid chain: Actin-like protein 6B (426 aa).

The interval 39–82 (TTVGLLAAEEGGGLELEGDKEKKGKIFHIDTNALHVPRDGAEVM) is essential for mediating its function in dendritic development; may contribute to neuronal-specific targeting.

It belongs to the actin family. In terms of assembly, component of the multiprotein chromatin-remodeling complexes SWI/SNF: SWI/SNF-A (BAF), SWI/SNF-B (PBAF) and related complexes. The canonical complex contains a catalytic subunit (either SMARCA4/BRG1/BAF190A or SMARCA2/BRM/BAF190B) and at least SMARCE1, ACTL6A/BAF53, SMARCC1/BAF155, SMARCC2/BAF170 and SMARCB1/SNF5/BAF47. Other subunits specific to each of the complexes may also be present permitting several possible combinations developmentally and tissue specific. Component of the BAF complex, which includes at least actin (ACTB), ARID1A/BAF250A, ARID1B/BAF250B, SMARCA2/BRM, SMARCA4/BRG1/BAF190A, ACTL6A/BAF53, ACTL6B/BAF53B, SMARCE1/BAF57, SMARCC1/BAF155, SMARCC2/BAF170, SMARCB1/SNF5/INI1 and one or more SMARCD1/BAF60A, SMARCD2/BAF60B, or SMARCD3/BAF60C. Component of neuron-specific chromatin remodeling complex (nBAF complex) composed of at least, ARID1A/BAF250A or ARID1B/BAF250B, SMARCD1/BAF60A or SMARCD2/BAF60B or SMARCD3/BAF60C, SMARCA2/BRM/BAF190B, SMARCA4/BRG1/BAF190A, SMARCB1/BAF47, SMARCC1/BAF155, SMARCE1/BAF57, SMARCC2/BAF170, DPF1/BAF45B, DPF3/BAF45C, ACTL6B/BAF53B and actin (ACTB). Note that the nBAF complex is polymorphic in regard to the ATPase, SMARCA2 and SMARCA4 occupying mutually exclusive positions. May be a component of the SWI/SNF-B (PBAF) chromatin remodeling complex, at least composed of SMARCA4/BRG1, SMARCB1/BAF47/SNF5, ACTL6A/BAF53A or ACTL6B/BAF53B, SMARCE1/BAF57, SMARCD1/BAF60A, SMARCD2/BAF60B, perhaps SMARCD3/BAF60C, SMARCC1/BAF155, SMARCC2/BAF170, PBRM1/BAF180, ARID2/BAF200 and actin.

It localises to the nucleus. Functionally, involved in transcriptional activation and repression of select genes by chromatin remodeling (alteration of DNA-nucleosome topology). Component of SWI/SNF chromatin remodeling complexes that carry out key enzymatic activities, changing chromatin structure by altering DNA-histone contacts within a nucleosome in an ATP-dependent manner. Belongs to the neuron-specific chromatin remodeling complex (nBAF complex), as such plays a role in remodeling mononucleosomes in an ATP-dependent fashion, and is required for postmitotic neural development and dendritic outgrowth. During neural development a switch from a stem/progenitor to a postmitotic chromatin remodeling mechanism occurs as neurons exit the cell cycle and become committed to their adult state. The transition from proliferating neural stem/progenitor cells to postmitotic neurons requires a switch in subunit composition of the npBAF and nBAF complexes. As neural progenitors exit mitosis and differentiate into neurons, npBAF complexes which contain ACTL6A/BAF53A and PHF10/BAF45A, are exchanged for homologous alternative ACTL6B/BAF53B and DPF1/BAF45B or DPF3/BAF45C subunits in neuron-specific complexes (nBAF). The npBAF complex is essential for the self-renewal/proliferative capacity of the multipotent neural stem cells. The nBAF complex along with CREST plays a role regulating the activity of genes essential for dendrite growth. ACTL6B/BAF53B is not essential for assembly of the nBAF complex but is required for targeting the complex and CREST to the promoter of genes essential for dendritic growth. Essential for neuronal maturation and dendrite development. The chain is Actin-like protein 6B from Homo sapiens (Human).